Reading from the N-terminus, the 164-residue chain is FMN reductase (NADH) RutF (164 aa).

The protein belongs to the non-flavoprotein flavin reductase family. RutF subfamily.

It carries out the reaction FMNH2 + NAD(+) = FMN + NADH + 2 H(+). Its function is as follows. Catalyzes the reduction of FMN to FMNH2 which is used to reduce pyrimidine by RutA via the Rut pathway. The sequence is that of FMN reductase (NADH) RutF from Klebsiella pneumoniae subsp. pneumoniae (strain ATCC 700721 / MGH 78578).